The primary structure comprises 360 residues: Peptide chain release factor 1 (360 aa).

Gln-237 carries the post-translational modification N5-methylglutamine.

It belongs to the prokaryotic/mitochondrial release factor family. Methylated by PrmC. Methylation increases the termination efficiency of RF1.

The protein localises to the cytoplasm. Its function is as follows. Peptide chain release factor 1 directs the termination of translation in response to the peptide chain termination codons UAG and UAA. In Pseudomonas syringae pv. syringae (strain B728a), this protein is Peptide chain release factor 1.